We begin with the raw amino-acid sequence, 554 residues long: Intraflagellar transport protein 56 (554 aa).

The tract at residues methionine 1–lysine 23 is disordered. TPR repeat units lie at residues glutamate 57–asparagine 90, aspartate 92–arginine 125, isoleucine 151–phenylalanine 184, and alanine 468–arginine 501.

The protein belongs to the IFT56 family. In terms of assembly, component of the IFT complex B.

It localises to the cell projection. The protein localises to the cilium. In terms of biological role, component of the intraflagellar transport (IFT) complex B required for transport of proteins in the motile cilium. Required for transport of specific ciliary cargo proteins related to motility, while it is neither required for IFT complex B assembly or motion nor for cilium assembly. Plays a key role in maintaining the integrity of the IFT complex B and the proper ciliary localization of the IFT complex B components. Essential for maintaining proper microtubule organization within the ciliary axoneme. The sequence is that of Intraflagellar transport protein 56 from Xenopus tropicalis (Western clawed frog).